The primary structure comprises 336 residues: MKIAIVNDMPMAIEALRRALAFEPAHQIIWVASNGADAVQRCVEQTPDLILMDLIMPVMDGVEATRRIMAETPCAIVIVTVDHEQNMRRVFEAMGHGALDVVDTPAIGGPNPKEAAAPLLRKILNIDWLIGQRVGLERVAATPRAAPSRRDRLVAIGSSAGGPAALEILLKALPVSFPAAIVLVQHVDQVFAAGMADWLSSASGLPVRLAREGETPQPGVVLLAGTNHHIRLLKDGTLAYTAEPVNEVYRPSIDVFFESVTRYWSGEAIGVLLTGMGRDGAQGLKAMRERGFLTIAQDQASSAVYGMPKAAAAIDAAVEIRPLPAIAPRLIEVFTQ.

In terms of domain architecture, Response regulatory spans 2–119 (KIAIVNDMPM…PNPKEAAAPL (118 aa)). The residue at position 53 (D53) is a 4-aspartylphosphate. The region spanning 147–336 (PSRRDRLVAI…APRLIEVFTQ (190 aa)) is the CheB-type methylesterase domain. Active-site residues include S159, H186, and D279.

It belongs to the CheB family. In terms of processing, phosphorylated by CheA. Phosphorylation of the N-terminal regulatory domain activates the methylesterase activity.

The protein resides in the cytoplasm. It carries out the reaction [protein]-L-glutamate 5-O-methyl ester + H2O = L-glutamyl-[protein] + methanol + H(+). The catalysed reaction is L-glutaminyl-[protein] + H2O = L-glutamyl-[protein] + NH4(+). Functionally, involved in chemotaxis. Part of a chemotaxis signal transduction system that modulates chemotaxis in response to various stimuli. Catalyzes the demethylation of specific methylglutamate residues introduced into the chemoreceptors (methyl-accepting chemotaxis proteins or MCP) by CheR. Also mediates the irreversible deamidation of specific glutamine residues to glutamic acid. In Pseudomonas syringae pv. syringae (strain B728a), this protein is Protein-glutamate methylesterase/protein-glutamine glutaminase 2.